A 509-amino-acid polypeptide reads, in one-letter code: Cardiolipin synthase 1 (509 aa).

3 helical membrane-spanning segments follow: residues 4-24 (PIVQ…LLNT), 30-50 (YTFV…VIFI), and 59-79 (LAWF…YAIF). PLD phosphodiesterase domains follow at residues 238–265 (VNYR…GDEY) and 422–449 (KDGF…DVRS). Residues His243, Lys245, Asp250, His427, Lys429, and Asp434 contribute to the active site.

The protein belongs to the phospholipase D family. Cardiolipin synthase subfamily.

It is found in the cell membrane. It carries out the reaction 2 a 1,2-diacyl-sn-glycero-3-phospho-(1'-sn-glycerol) = a cardiolipin + glycerol. Its function is as follows. Catalyzes the reversible phosphatidyl group transfer from one phosphatidylglycerol molecule to another to form cardiolipin (CL) (diphosphatidylglycerol) and glycerol. The protein is Cardiolipin synthase 1 (cls1) of Bacillus cereus (strain ATCC 14579 / DSM 31 / CCUG 7414 / JCM 2152 / NBRC 15305 / NCIMB 9373 / NCTC 2599 / NRRL B-3711).